We begin with the raw amino-acid sequence, 709 residues long: Caprin-1 (709 aa).

Composition is skewed to low complexity over residues 1-15 and 22-43; these read MPSATSHSGSGSKSS and GSSGSEAAAGAGAAAPASQHPA. Residues 1–50 form a disordered region; sequence MPSATSHSGSGSKSSGPPPPSGSSGSEAAAGAGAAAPASQHPATGTGAVQ. P2 is modified (N-acetylproline). Residue P2 is modified to N-acetylalanine. Residue S10 is modified to Phosphoserine. A coiled-coil region spans residues 60-94; the sequence is VIDKKLRNLEKKKGKLDDYQERMNKGERLNQDQLD. A Phosphoserine modification is found at S115. The stretch at 125 to 153 forms a coiled coil; it reads KTIKKTARREQLMREEAEQKRLKTVLELQ. R165 is subject to Omega-N-methylarginine. A disordered region spans residues 260–291; that stretch reads EEAASAPAVEDQVPEAEPEPAEEYTEQSEVES. The segment covering 271–291 has biased composition (acidic residues); it reads QVPEAEPEPAEEYTEQSEVES. A phosphoserine mark is found at S335 and S343. Residues 360–381 form a G3BP1-binding region; sequence QDLMAQMQGPYNFIQDSMLDFE. 3 disordered regions span residues 417–446, 475–499, and 524–709; these read LAQPNQVPVQPEATQVPLVSSTSEGYTASQ, TDQTTASSSLPAASQPQVFQAGTSK, and APVP…QQVN. Residues 433–446 show a composition bias toward polar residues; it reads PLVSSTSEGYTASQ. 2 stretches are compositionally biased toward low complexity: residues 477–491 and 537–570; these read QTTASSSLPAASQPQ and QQNQYQASYNQSFSSQPHQVEQTELQQEQLQTVV. Positions 577-605 are enriched in polar residues; the sequence is PDQSHQVTGNHQQPPQQNTGFPRSNQPYY. The residue at position 625 (Y625) is a Phosphotyrosine; by EPHA4. R626 and R633 each carry omega-N-methylarginine. Y636 and Y639 each carry phosphotyrosine; by EPHA4. Residue R640 is modified to Omega-N-methylarginine. Over residues 642–657 the composition is skewed to polar residues; the sequence is SFSNTPNSGYTQSQFS. S644 and S649 each carry an O-linked (GlcNAc) serine glycan. Residues Y651, Y662, Y665, and Y670 each carry the phosphotyrosine; by EPHA4 modification. Low complexity-rich tracts occupy residues 676-686 and 697-709; these read RGSGQSGPRGA and NRGMPQMNTQQVN. R698 carries the asymmetric dimethylarginine; alternate modification. R698 carries the post-translational modification Omega-N-methylarginine; alternate.

It belongs to the caprin family. May form homomultimers. Interacts with G3BP1; interaction is direct and promotes stress granule formation. Interacts with G3BP2; interaction is direct and promotes stress granule formation. Interacts with PQBP1. Interacts with DDX3X. Interacts (when phosphorylated by EPHA4) with FMR1; interaction with FMR1 promotes formation of a membraneless compartment. In terms of assembly, (Microbial infection) Interacts with Zika virus capsid protein C; this interaction is probably linked to the inhibition of stress granules formation by the virus. As to quaternary structure, (Microbial infection) Interacts with rotavirus A non-structural protein 5; this interaction probably plays a role in the sequestration of CAPRIN1 in viral factories. (Microbial infection) Interacts with Japanese encephalitis virus capsid protein C; this interaction is involved in the suppression of the integrated stress response by the virus. Post-translationally, tyrosine phosphorylation by EPHA4 promotes interaction with FMR1 and liquid-liquid phase separation (LLPS) for the formation of a membraneless compartment that concentrates mRNAs with associated regulatory factors. O-glycosylated (O-GlcNAcylated), in a cell cycle-dependent manner. O-glycosylation by OGT inhibit ability to undergo liquid-liquid phase separation (LLPS). Ubiquitous.

It is found in the cytoplasm. It localises to the cytoplasmic ribonucleoprotein granule. The protein resides in the cytosol. The protein localises to the cell projection. Its subcellular location is the dendrite. It is found in the lamellipodium. Ability to mediate liquid-liquid phase separation is regulated by ATP: moderate concentrations of ATP enhance phase separation, whereas high concentrations of ATP lead to inhibition of phase separation. MRNA-binding protein that acts as a regulator of mRNAs transport, translation and/or stability, and which is involved in neurogenesis, synaptic plasticity in neurons and cell proliferation and migration in multiple cell types. Plays an essential role in cytoplasmic stress granule formation. Acts as an mRNA regulator by mediating formation of some phase-separated membraneless compartment: undergoes liquid-liquid phase separation upon binding to target mRNAs, leading to assemble mRNAs into cytoplasmic ribonucleoprotein granules that concentrate mRNAs with associated regulatory factors. Undergoes liquid-liquid phase separation following phosphorylation and interaction with FMR1, promoting formation of cytoplasmic ribonucleoprotein granules that concentrate mRNAs with factors that inhibit translation and mediate deadenylation of target mRNAs. In these cytoplasmic ribonucleoprotein granules, CAPRIN1 mediates recruitment of CNOT7 deadenylase, leading to mRNA deadenylation and degradation. Binds directly and selectively to MYC and CCND2 mRNAs. In neuronal cells, directly binds to several mRNAs associated with RNA granules, including BDNF, CAMK2A, CREB1, MAP2, NTRK2 mRNAs, as well as to GRIN1 and KPNB1 mRNAs, but not to rRNAs. In Homo sapiens (Human), this protein is Caprin-1.